Reading from the N-terminus, the 134-residue chain is ATP synthase epsilon chain, chloroplastic (134 aa).

It belongs to the ATPase epsilon chain family. As to quaternary structure, F-type ATPases have 2 components, CF(1) - the catalytic core - and CF(0) - the membrane proton channel. CF(1) has five subunits: alpha(3), beta(3), gamma(1), delta(1), epsilon(1). CF(0) has three main subunits: a, b and c.

The protein localises to the plastid. The protein resides in the chloroplast thylakoid membrane. Functionally, produces ATP from ADP in the presence of a proton gradient across the membrane. This is ATP synthase epsilon chain, chloroplastic from Pyropia yezoensis (Susabi-nori).